We begin with the raw amino-acid sequence, 337 residues long: tRNA N6-adenosine threonylcarbamoyltransferase (337 aa).

Fe cation-binding residues include histidine 111 and histidine 115. Residues 134 to 138 (LVSGG), aspartate 167, glycine 180, and asparagine 272 each bind substrate. Aspartate 300 contacts Fe cation.

Belongs to the KAE1 / TsaD family. The cofactor is Fe(2+).

It is found in the cytoplasm. The catalysed reaction is L-threonylcarbamoyladenylate + adenosine(37) in tRNA = N(6)-L-threonylcarbamoyladenosine(37) in tRNA + AMP + H(+). Functionally, required for the formation of a threonylcarbamoyl group on adenosine at position 37 (t(6)A37) in tRNAs that read codons beginning with adenine. Is involved in the transfer of the threonylcarbamoyl moiety of threonylcarbamoyl-AMP (TC-AMP) to the N6 group of A37, together with TsaE and TsaB. TsaD likely plays a direct catalytic role in this reaction. This is tRNA N6-adenosine threonylcarbamoyltransferase from Escherichia coli O127:H6 (strain E2348/69 / EPEC).